Consider the following 563-residue polypeptide: Lipase 2 (563 aa).

The signal sequence occupies residues Met1–Ala19. At Gln20 the chain carries Pyrrolidone carboxylic acid. Residues Cys80 and Cys124 are joined by a disulfide bond. Ser236 serves as the catalytic Acyl-ester intermediate. Cys295 and Cys307 are disulfide-bonded. An N-linked (GlcNAc...) asparagine glycan is attached at Asn302. Glu373 functions as the Charge relay system in the catalytic mechanism. N-linked (GlcNAc...) asparagine glycosylation occurs at Asn383. Residue His482 is the Charge relay system of the active site.

The protein belongs to the type-B carboxylesterase/lipase family. In terms of assembly, monomer.

Its subcellular location is the secreted. It carries out the reaction a triacylglycerol + H2O = a diacylglycerol + a fatty acid + H(+). Its function is as follows. Hydrolyzes all ester bonds in triglyceride and displays a high affinity for triolein. For unsaturated substrates having long fatty acyl chains (C18:2 cis-9, cis-12 and C18:3 cis-9, cis-12, cis-15) GCL I shows higher specific activity than GCL II, whereas GCL II shows higher specific activity against saturated substrates having short fatty acid chains (C8, C10, C12 and C14). This Geotrichum candidum (Oospora lactis) protein is Lipase 2 (LIP2).